Consider the following 376-residue polypeptide: Transcription factor Sp6 (376 aa).

The disordered stretch occupies residues 1–70 (MLTAVCGSLG…VDFSQGYELP (70 aa)). A 9aaTAD motif is present at residues 118 to 126 (GSWWDLHPG). The tract at residues 167–223 (HPHAHHLLPAAGGQHLLGPPDGAKALEVAAPESQGLDSSLDGAARPKGSRRSVPRSS) is disordered. A compositionally biased stretch (low complexity) spans 173 to 186 (LLPAAGGQHLLGPP). 3 C2H2-type zinc fingers span residues 254–278 (HNCH…LRWH), 284–308 (FVCN…LQTH), and 314–336 (FPCA…MKTH). Residues 333–343 (MKTHEGAKEEA) are compositionally biased toward basic and acidic residues. The tract at residues 333-376 (MKTHEGAKEEAAGAASGEGKAGGAVEPPGGKGKREAEGSVAPSN) is disordered.

It belongs to the Sp1 C2H2-type zinc-finger protein family. In terms of tissue distribution, ubiquitous.

The protein localises to the nucleus. Functionally, promotes cell proliferation. Plays a role in tooth germ growth. Plays a role in the control of enamel mineralization. Binds the AMBN promoter. The chain is Transcription factor Sp6 (SP6) from Homo sapiens (Human).